A 278-amino-acid polypeptide reads, in one-letter code: NADPH-dependent 7-cyano-7-deazaguanine reductase (278 aa).

87–89 (IES) is a binding site for substrate. 89 to 90 (SK) is a binding site for NADPH. Residue cysteine 185 is the Thioimide intermediate of the active site. The active-site Proton donor is aspartate 192. Residue 224–225 (HE) coordinates substrate. Position 253–254 (253–254 (RG)) interacts with NADPH. A disordered region spans residues 255–278 (GLDINPYRSTNPTFSVQNHRSFRQ). A compositionally biased stretch (polar residues) spans 261–278 (YRSTNPTFSVQNHRSFRQ).

The protein belongs to the GTP cyclohydrolase I family. QueF type 2 subfamily. In terms of assembly, homodimer.

Its subcellular location is the cytoplasm. It catalyses the reaction 7-aminomethyl-7-carbaguanine + 2 NADP(+) = 7-cyano-7-deazaguanine + 2 NADPH + 3 H(+). The protein operates within tRNA modification; tRNA-queuosine biosynthesis. Functionally, catalyzes the NADPH-dependent reduction of 7-cyano-7-deazaguanine (preQ0) to 7-aminomethyl-7-deazaguanine (preQ1). This is NADPH-dependent 7-cyano-7-deazaguanine reductase from Coxiella burnetii (strain CbuG_Q212) (Coxiella burnetii (strain Q212)).